A 349-amino-acid chain; its full sequence is NAC domain-containing protein JA2 (349 aa).

Residues 14–163 (LPPGFRFYPT…EWVLCRIYKK (150 aa)) form the NAC domain. A DNA-binding region spans residues 111–169 (VGIKKALVFYVGKAPKGSKTNWIMHEYRLFESSRKNNGSSKLDEWVLCRIYKKNSSGPK). A disordered region spans residues 169–194 (KPLMSGLHSSNEYSHGSSTSSSSQFD). A compositionally biased stretch (low complexity) spans 177-191 (SSNEYSHGSSTSSSS).

Expressed in guard cells of the epidermis.

The protein resides in the nucleus. Transcription factor involved in abscisic acid-mediated stomatal closure. Regulates the expression of NCED1, a gene involved in the biosynthesis of abscisic acid (ABA). Required for the stomatal closure induced by the bacterial pathogen Pseudomonas syringae pv tomato DC3000, but not for stomatal reopening. This chain is NAC domain-containing protein JA2, found in Solanum lycopersicum (Tomato).